An 88-amino-acid chain; its full sequence is MANIKSAKKRIKVIETKTLRNKMIKSALKTYIKKFEAAFEAKNVEESKTAFATVSKALDMAASKGIIHKNKAARKKSRLALKLNSLNA.

The protein belongs to the bacterial ribosomal protein bS20 family.

In terms of biological role, binds directly to 16S ribosomal RNA. The polypeptide is Small ribosomal subunit protein bS20 (Clostridium acetobutylicum (strain ATCC 824 / DSM 792 / JCM 1419 / IAM 19013 / LMG 5710 / NBRC 13948 / NRRL B-527 / VKM B-1787 / 2291 / W)).